Consider the following 69-residue polypeptide: DNA gyrase inhibitor YacG (69 aa).

The Zn(2+) site is built by Cys14, Cys17, Cys33, and Cys37. The disordered stretch occupies residues 46 to 69; the sequence is ADEEKSIPGAPDMSDSDGWSEDQY. A compositionally biased stretch (acidic residues) spans 59 to 69; sequence SDSDGWSEDQY.

This sequence belongs to the DNA gyrase inhibitor YacG family. As to quaternary structure, interacts with GyrB. It depends on Zn(2+) as a cofactor.

Functionally, inhibits all the catalytic activities of DNA gyrase by preventing its interaction with DNA. Acts by binding directly to the C-terminal domain of GyrB, which probably disrupts DNA binding by the gyrase. This chain is DNA gyrase inhibitor YacG, found in Aliivibrio fischeri (strain MJ11) (Vibrio fischeri).